The primary structure comprises 267 residues: Hydroxynaphthalene reductase-like protein Arp2 (267 aa).

Residues Ile-25, Asn-45, Asp-71, and Asn-98 each contribute to the NADP(+) site. Active-site proton donor residues include Ser-147 and Ser-148. NADP(+) contacts are provided by Tyr-162, Lys-166, Val-195, and Thr-197. Catalysis depends on Tyr-162, which acts as the Proton acceptor. Residue Lys-166 is the Lowers pKa of active site Tyr of the active site.

This sequence belongs to the short-chain dehydrogenases/reductases (SDR) family.

In terms of biological role, hydroxynaphthalene reductase-like protein; part of the Pks2 gene cluster that mediates the formation of infectious structures (appressoria), enabling these fungi to kill insects faster. The product of the Pks2 gene cluster is different from the one of Pks1 and has still not been identified. The polypeptide is Hydroxynaphthalene reductase-like protein Arp2 (Metarhizium acridum (strain CQMa 102)).